The primary structure comprises 76 residues: Omega-conotoxin-like TeAr94 (76 aa).

Positions 1–22 are cleaved as a signal peptide; it reads MKLTCMMIVAVLFLTAWTFVTA. Residues 23 to 50 constitute a propeptide that is removed on maturation; sequence VPHSSNALENLYLKAHHEMNNPEDSELN. 3 disulfide bridges follow: C53-C67, C60-C71, and C66-C75.

This sequence belongs to the conotoxin O1 superfamily. In terms of tissue distribution, expressed by the venom duct.

It localises to the secreted. Functionally, omega-conotoxins act at presynaptic membranes, they bind and block voltage-gated calcium channels. The sequence is that of Omega-conotoxin-like TeAr94 from Conus textile (Cloth-of-gold cone).